The following is a 459-amino-acid chain: Elongation factor 1-alpha (459 aa).

Residue G2 is modified to N,N,N-trimethylglycine. An N6,N6-dimethyllysine; alternate modification is found at K3. N6-methyllysine; alternate is present on K3. The tr-type G domain maps to K5–T240. Residues G14–S21 form a G1 region. G14–S21 contributes to the GTP binding site. K30 carries the post-translational modification N6-methyllysine. A G2 region spans residues G70–D74. K79 is modified (N6,N6,N6-trimethyllysine). Residues D91–G94 form a G3 region. Residues D91–H95 and N153–D156 contribute to the GTP site. The interval N153–D156 is G4. A G5 region spans residues S192–W194. K316 carries the post-translational modification N6,N6-dimethyllysine; alternate. At K316 the chain carries N6-methyllysine; alternate. At K390 the chain carries N6-methyllysine.

The protein belongs to the TRAFAC class translation factor GTPase superfamily. Classic translation factor GTPase family. EF-Tu/EF-1A subfamily.

Its subcellular location is the cytoplasm. Functionally, this protein promotes the GTP-dependent binding of aminoacyl-tRNA to the A-site of ribosomes during protein biosynthesis. The chain is Elongation factor 1-alpha (TEF1) from Cryptococcus neoformans var. neoformans serotype D (strain B-3501A) (Filobasidiella neoformans).